We begin with the raw amino-acid sequence, 307 residues long: MKLDVIGAGAFGAGLAIAYARAGLDVTLWARDVAGLRGGESPRLPGHAFPDGLHVTGDLSACTADVALIAIPTQSIAGFVAKGGLAPRVAVSCAKGIDRSSGHGPTALLAALAPCTAQLTGPSFAADIARGLPTALTIACADAAEGAALQNALSTPTLRLYTTQDVIGAELGGALKNVIAIAAGAVIGKGLGDSARAALIARGFAEMTRYATAKGALPETLTGLSGLGDLILTCGSAQSRNFRFGHALATGDRLPEGTTVEGLHTARQLAASPEDTPIADTVAALADGTLDIDGALSHLLSRPLKPE.

3 residues coordinate NADPH: phenylalanine 11, arginine 31, and lysine 95. Sn-glycerol 3-phosphate-binding residues include lysine 95, glycine 121, and serine 123. Residue alanine 125 coordinates NADPH. Sn-glycerol 3-phosphate-binding residues include lysine 176, aspartate 229, serine 239, arginine 240, and asparagine 241. Lysine 176 (proton acceptor) is an active-site residue. Position 240 (arginine 240) interacts with NADPH. An NADPH-binding site is contributed by glutamate 261.

It belongs to the NAD-dependent glycerol-3-phosphate dehydrogenase family.

Its subcellular location is the cytoplasm. It catalyses the reaction sn-glycerol 3-phosphate + NAD(+) = dihydroxyacetone phosphate + NADH + H(+). It carries out the reaction sn-glycerol 3-phosphate + NADP(+) = dihydroxyacetone phosphate + NADPH + H(+). Its pathway is membrane lipid metabolism; glycerophospholipid metabolism. Functionally, catalyzes the reduction of the glycolytic intermediate dihydroxyacetone phosphate (DHAP) to sn-glycerol 3-phosphate (G3P), the key precursor for phospholipid synthesis. This Jannaschia sp. (strain CCS1) protein is Glycerol-3-phosphate dehydrogenase [NAD(P)+].